Reading from the N-terminus, the 351-residue chain is uncharacterized protein (351 aa).

Positions 215, 226, 290, 319, and 333 each coordinate Mn(2+).

Belongs to the peptidase M24B family. Mn(2+) is required as a cofactor.

This is an uncharacterized protein from Staphylococcus aureus (strain MW2).